Here is a 269-residue protein sequence, read N- to C-terminus: Shikimate dehydrogenase (NADP(+)) (269 aa).

Shikimate is bound by residues 14 to 16 (SKS) and threonine 61. The active-site Proton acceptor is lysine 65. Glutamate 77 is a binding site for NADP(+). Residues asparagine 86 and aspartate 102 each contribute to the shikimate site. NADP(+) contacts are provided by residues 126 to 130 (GAGGA), 149 to 154 (NRTLSK), and methionine 213. Shikimate is bound at residue tyrosine 215. NADP(+) is bound at residue glycine 238.

It belongs to the shikimate dehydrogenase family. As to quaternary structure, homodimer.

It carries out the reaction shikimate + NADP(+) = 3-dehydroshikimate + NADPH + H(+). It functions in the pathway metabolic intermediate biosynthesis; chorismate biosynthesis; chorismate from D-erythrose 4-phosphate and phosphoenolpyruvate: step 4/7. Its function is as follows. Involved in the biosynthesis of the chorismate, which leads to the biosynthesis of aromatic amino acids. Catalyzes the reversible NADPH linked reduction of 3-dehydroshikimate (DHSA) to yield shikimate (SA). The chain is Shikimate dehydrogenase (NADP(+)) from Pasteurella multocida (strain Pm70).